A 397-amino-acid polypeptide reads, in one-letter code: Transcription factor GATA-5 (397 aa).

The interval 48–116 (GCEPSPQPPE…SAGGRDGSAY (69 aa)) is disordered. Low complexity predominate over residues 87–101 (PPGATAFPFAHSPSG). Gly residues predominate over residues 102-112 (PGSGGSAGGRD). 2 GATA-type zinc fingers span residues 189–213 (CVNC…CNAC) and 243–267 (CTNC…CNAC). A disordered region spans residues 281-356 (AMKKESIQTR…ASGQEDDSLA (76 aa)). Positions 289-298 (TRKRKPKTIA) are enriched in basic residues. Over residues 310-335 (ASASPSAVASTDSSAATSKAKPSLAS) the composition is skewed to low complexity.

It is found in the nucleus. Functionally, transcription factor required during cardiovascular development. Plays an important role in the transcriptional program(s) that underlies smooth muscle cell diversity. Binds to the functionally important CEF-1 nuclear protein binding site in the cardiac-specific slow/cardiac troponin C transcriptional enhancer. The sequence is that of Transcription factor GATA-5 from Homo sapiens (Human).